A 523-amino-acid chain; its full sequence is Tyrosine/DOPA decarboxylase 5 (523 aa).

Residues 1 to 19 are compositionally biased toward polar residues; it reads MGSLPTDNLESMSICSQNP. Disordered regions lie at residues 1-20 and 47-66; these read MGSL…QNPL and SRSQ…APNH. Lys-321 is modified (N6-(pyridoxal phosphate)lysine).

The protein belongs to the group II decarboxylase family. In terms of assembly, homodimer. Requires pyridoxal 5'-phosphate as cofactor. In terms of tissue distribution, roots.

The catalysed reaction is L-tyrosine + H(+) = tyramine + CO2. It catalyses the reaction L-dopa + H(+) = dopamine + CO2. The enzyme catalyses 5-hydroxy-L-tryptophan + H(+) = serotonin + CO2. Functionally, may play an important role in providing precursors for alkaloid synthesis in the roots and germinating seedlings. This Papaver somniferum (Opium poppy) protein is Tyrosine/DOPA decarboxylase 5 (TYDC5).